The following is a 941-amino-acid chain: Isoleucine--tRNA ligase (941 aa).

A 'HIGH' region motif is present at residues Pro-58–His-68. Glu-564 provides a ligand contact to L-isoleucyl-5'-AMP. The 'KMSKS' region signature appears at Lys-605–Ser-609. Lys-608 serves as a coordination point for ATP. Zn(2+) is bound by residues Cys-904, Cys-907, Cys-924, and Cys-927.

Belongs to the class-I aminoacyl-tRNA synthetase family. IleS type 1 subfamily. In terms of assembly, monomer. It depends on Zn(2+) as a cofactor.

The protein localises to the cytoplasm. The catalysed reaction is tRNA(Ile) + L-isoleucine + ATP = L-isoleucyl-tRNA(Ile) + AMP + diphosphate. Catalyzes the attachment of isoleucine to tRNA(Ile). As IleRS can inadvertently accommodate and process structurally similar amino acids such as valine, to avoid such errors it has two additional distinct tRNA(Ile)-dependent editing activities. One activity is designated as 'pretransfer' editing and involves the hydrolysis of activated Val-AMP. The other activity is designated 'posttransfer' editing and involves deacylation of mischarged Val-tRNA(Ile). The protein is Isoleucine--tRNA ligase of Buchnera aphidicola subsp. Cinara cedri (strain Cc).